Reading from the N-terminus, the 493-residue chain is Galactose-1-phosphate uridylyltransferase (493 aa).

Belongs to the galactose-1-phosphate uridylyltransferase type 2 family.

It is found in the cytoplasm. It carries out the reaction alpha-D-galactose 1-phosphate + UDP-alpha-D-glucose = alpha-D-glucose 1-phosphate + UDP-alpha-D-galactose. The protein operates within carbohydrate metabolism; galactose metabolism. This chain is Galactose-1-phosphate uridylyltransferase (galT), found in Streptococcus thermophilus.